A 102-amino-acid chain; its full sequence is Large ribosomal subunit protein bL21 (102 aa).

It belongs to the bacterial ribosomal protein bL21 family. In terms of assembly, part of the 50S ribosomal subunit. Contacts protein L20.

Its function is as follows. This protein binds to 23S rRNA in the presence of protein L20. This is Large ribosomal subunit protein bL21 from Campylobacter hominis (strain ATCC BAA-381 / DSM 21671 / CCUG 45161 / LMG 19568 / NCTC 13146 / CH001A).